The primary structure comprises 346 residues: Signal recognition particle receptor FtsY (346 aa).

GTP-binding positions include 143-150, 225-229, and 289-292; these read GVNGVGKT, DTSGR, and TKMD.

Belongs to the GTP-binding SRP family. FtsY subfamily. As to quaternary structure, part of the signal recognition particle protein translocation system, which is composed of SRP and FtsY.

Its subcellular location is the cell membrane. The protein resides in the cytoplasm. The catalysed reaction is GTP + H2O = GDP + phosphate + H(+). Its function is as follows. Involved in targeting and insertion of nascent membrane proteins into the cytoplasmic membrane. Acts as a receptor for the complex formed by the signal recognition particle (SRP) and the ribosome-nascent chain (RNC). This chain is Signal recognition particle receptor FtsY, found in Mycoplasma genitalium (strain ATCC 33530 / DSM 19775 / NCTC 10195 / G37) (Mycoplasmoides genitalium).